We begin with the raw amino-acid sequence, 708 residues long: Polyribonucleotide nucleotidyltransferase (708 aa).

2 residues coordinate Mg(2+): aspartate 488 and aspartate 494. Residues 555–614 (PRIYTMKIPQKKIAEVIGKGGATIRQLTEETGTTIEIGDDGTIKIAATDGESAANAISRI) form the KH domain. The S1 motif domain maps to 624–692 (GTIYEGKVVR…RQGRVRLSIK (69 aa)).

Belongs to the polyribonucleotide nucleotidyltransferase family. As to quaternary structure, component of the RNA degradosome, which is a multiprotein complex involved in RNA processing and mRNA degradation. Mg(2+) is required as a cofactor.

It is found in the cytoplasm. The catalysed reaction is RNA(n+1) + phosphate = RNA(n) + a ribonucleoside 5'-diphosphate. In terms of biological role, involved in mRNA degradation. Catalyzes the phosphorolysis of single-stranded polyribonucleotides processively in the 3'- to 5'-direction. The sequence is that of Polyribonucleotide nucleotidyltransferase from Pseudoalteromonas translucida (strain TAC 125).